The following is a 371-amino-acid chain: tRNA-specific 2-thiouridylase MnmA (371 aa).

ATP is bound by residues 13 to 20 (GMSGGVDS) and Met-39. Residues 99 to 101 (NPD) form an interaction with target base in tRNA region. Cys-104 (nucleophile) is an active-site residue. Cys-104 and Cys-200 are oxidised to a cystine. Gly-128 lines the ATP pocket. An interaction with tRNA region spans residues 150–152 (KDQ). The Cysteine persulfide intermediate role is filled by Cys-200. Residues 308–309 (RY) are interaction with tRNA.

Belongs to the MnmA/TRMU family.

Its subcellular location is the cytoplasm. It carries out the reaction S-sulfanyl-L-cysteinyl-[protein] + uridine(34) in tRNA + AH2 + ATP = 2-thiouridine(34) in tRNA + L-cysteinyl-[protein] + A + AMP + diphosphate + H(+). Its function is as follows. Catalyzes the 2-thiolation of uridine at the wobble position (U34) of tRNA, leading to the formation of s(2)U34. The protein is tRNA-specific 2-thiouridylase MnmA of Listeria monocytogenes serotype 4a (strain HCC23).